The following is a 70-amino-acid chain: uncharacterized protein (70 aa).

A helical membrane pass occupies residues 50 to 70; the sequence is INVVLVLIIALIIFILMLDGV.

The protein localises to the membrane. This is an uncharacterized protein from Dictyostelium discoideum (Social amoeba).